A 217-amino-acid chain; its full sequence is Outer-membrane lipoprotein LolB (217 aa).

Residues 1-20 (MSKALRTLALSGLVLVGLSA) form the signal peptide. The N-palmitoyl cysteine moiety is linked to residue cysteine 21. The S-diacylglycerol cysteine moiety is linked to residue cysteine 21.

The protein belongs to the LolB family. As to quaternary structure, monomer.

The protein resides in the cell outer membrane. Functionally, plays a critical role in the incorporation of lipoproteins in the outer membrane after they are released by the LolA protein. The sequence is that of Outer-membrane lipoprotein LolB from Xanthomonas oryzae pv. oryzae (strain MAFF 311018).